The sequence spans 514 residues: CUGBP Elav-like family member 2 (514 aa).

3 RRM domains span residues 44–127 (IKMF…PADS), 136–216 (RKLF…FADT), and 429–507 (ANLF…LKRS).

This sequence belongs to the CELF/BRUNOL family.

The protein localises to the nucleus. Its subcellular location is the cytoplasm. In terms of biological role, RNA-binding protein implicated in the regulation of several post-transcriptional events. May be involved in pre-mRNA alternative splicing, mRNA translation repression and stability. The sequence is that of CUGBP Elav-like family member 2 (celf2) from Danio rerio (Zebrafish).